Reading from the N-terminus, the 99-residue chain is MDLIGFGYAALVTFGSILGYKRRGGVLSLIAGLFVGFLAGYGAYRVSNDKRDVKLSLFTAFFLATIMGVRFKRSKKIMPAGLVAGLSLLMILRLVLLLL.

The next 3 helical transmembrane spans lie at 1 to 21, 24 to 44, and 79 to 99; these read MDLI…LGYK, GGVL…YGAY, and PAGL…LLLL.

It belongs to the TMEM14 family.

It is found in the mitochondrion membrane. The protein localises to the endoplasmic reticulum membrane. In terms of biological role, inhibits apoptosis via negative regulation of the mitochondrial outer membrane permeabilization involved in apoptotic signaling pathway. The protein is Transmembrane protein 14A (TMEM14A) of Bos taurus (Bovine).